We begin with the raw amino-acid sequence, 208 residues long: Protein late bloomer (208 aa).

4 helical membrane passes run 10-30, 41-61, 67-87, and 174-194; these read IASIVLNAVLGFLAAGAIGWI, FVIAAYIACSLILVFALLGIF, SVVLTATSAVFLLILAILQIV, and FIIVSWVLVAFELICFALAVF.

This sequence belongs to the tetraspanin (TM4SF) family. Transiently expressed on motor axons, growth cones and terminal arbors.

It localises to the membrane. It is found in the synapse. In terms of biological role, facilitates synapse formation. In Drosophila melanogaster (Fruit fly), this protein is Protein late bloomer (lbm).